We begin with the raw amino-acid sequence, 274 residues long: Rhamnulose-1-phosphate aldolase (274 aa).

Glutamate 117 is an active-site residue. Histidine 141, histidine 143, and histidine 212 together coordinate Zn(2+).

This sequence belongs to the aldolase class II family. RhaD subfamily. In terms of assembly, homotetramer. Zn(2+) is required as a cofactor.

The protein localises to the cytoplasm. It catalyses the reaction L-rhamnulose 1-phosphate = (S)-lactaldehyde + dihydroxyacetone phosphate. Its pathway is carbohydrate degradation; L-rhamnose degradation; glycerone phosphate from L-rhamnose: step 3/3. In terms of biological role, catalyzes the reversible cleavage of L-rhamnulose-1-phosphate to dihydroxyacetone phosphate (DHAP) and L-lactaldehyde. The protein is Rhamnulose-1-phosphate aldolase of Escherichia coli (strain K12 / MC4100 / BW2952).